Reading from the N-terminus, the 144-residue chain is Histone H3.1 (144 aa).

Residues 1-45 (MARTKQSARKTTGGKAPRKQLSAKSARKGVSPASSAGAKKSRYRP) are disordered. Lysine 5 carries the N6,N6,N6-trimethyllysine; alternate modification. Lysine 5 bears the N6,N6-dimethyllysine; alternate mark. 2 positions are modified to N6-methyllysine; alternate: lysine 5 and lysine 10. 6 positions are modified to N6-acetyllysine; alternate: lysine 10, lysine 15, lysine 19, lysine 24, lysine 28, and lysine 39. Lysine 15 is subject to N6,N6-dimethyllysine; alternate. Residues lysine 19, lysine 24, lysine 28, and lysine 39 each carry the N6-methyllysine; alternate modification. Residues lysine 28 and lysine 39 each carry the N6,N6,N6-trimethyllysine; alternate modification. N6,N6-dimethyllysine; alternate occurs at positions 28 and 39. Lysine 58 is modified (N6-acetyllysine).

This sequence belongs to the histone H3 family. The nucleosome is a histone octamer containing two molecules each of H2A, H2B, H3 and H4 assembled in one H3-H4 heterotetramer and two H2A-H2B heterodimers. The octamer wraps approximately 147 bp of DNA. Mono-, di- and trimethylated to form H3K4me1/2/3. H3K4me activates gene expression by regulating transcription elongation and plays a role in telomere length maintenance. H3K4me enrichment correlates with transcription levels, and occurs in a 5' to 3' gradient with H3K4me3 enrichment at the 5'-end of genes, shifting to H3K4me2 and then H3K4me1. H3K36me represses gene expression. Post-translationally, acetylation of histone H3 leads to transcriptional activation.

Its subcellular location is the nucleus. The protein resides in the chromosome. In terms of biological role, core component of nucleosome. Nucleosomes wrap and compact DNA into chromatin, limiting DNA accessibility to the cellular machineries which require DNA as a template. Histones thereby play a central role in transcription regulation, DNA repair, DNA replication and chromosomal stability. DNA accessibility is regulated via a complex set of post-translational modifications of histones, also called histone code, and nucleosome remodeling. The protein is Histone H3.1 (HHT1) of Encephalitozoon cuniculi (strain GB-M1) (Microsporidian parasite).